Consider the following 420-residue polypeptide: Serine hydroxymethyltransferase (420 aa).

Residues Leu123 and 127–129 contribute to the (6S)-5,6,7,8-tetrahydrofolate site; that span reads GHL. Lys232 carries the post-translational modification N6-(pyridoxal phosphate)lysine. 357-359 serves as a coordination point for (6S)-5,6,7,8-tetrahydrofolate; the sequence is SPF.

This sequence belongs to the SHMT family. Homodimer. Requires pyridoxal 5'-phosphate as cofactor.

The protein localises to the cytoplasm. It catalyses the reaction (6R)-5,10-methylene-5,6,7,8-tetrahydrofolate + glycine + H2O = (6S)-5,6,7,8-tetrahydrofolate + L-serine. The protein operates within one-carbon metabolism; tetrahydrofolate interconversion. It participates in amino-acid biosynthesis; glycine biosynthesis; glycine from L-serine: step 1/1. Functionally, catalyzes the reversible interconversion of serine and glycine with tetrahydrofolate (THF) serving as the one-carbon carrier. This reaction serves as the major source of one-carbon groups required for the biosynthesis of purines, thymidylate, methionine, and other important biomolecules. Also exhibits THF-independent aldolase activity toward beta-hydroxyamino acids, producing glycine and aldehydes, via a retro-aldol mechanism. The chain is Serine hydroxymethyltransferase from Streptococcus pyogenes serotype M4 (strain MGAS10750).